Consider the following 120-residue polypeptide: Small ribosomal subunit protein eS24 (120 aa).

A disordered region spans residues 101-120; it reads RDAGTKQKKGGSKGGQGAKG.

It belongs to the eukaryotic ribosomal protein eS24 family.

The chain is Small ribosomal subunit protein eS24 from Saccharolobus islandicus (strain M.16.27) (Sulfolobus islandicus).